A 232-amino-acid polypeptide reads, in one-letter code: uncharacterized protein (232 aa).

A helical membrane pass occupies residues 209–229; that stretch reads ATISTPALGYAYFLFTLTLVF.

The protein localises to the host membrane. This is an uncharacterized protein from Saccharolobus islandicus (Sulfolobus islandicus).